The sequence spans 131 residues: Profilin-7 (131 aa).

Cys13 and Cys115 are disulfide-bonded. Positions 81-97 (AVIRGKKGAGGITIKKT) match the Involved in PIP2 interaction motif. Thr111 is subject to Phosphothreonine.

The protein belongs to the profilin family. In terms of assembly, occurs in many kinds of cells as a complex with monomeric actin in a 1:1 ratio. Post-translationally, phosphorylated by MAP kinases.

The protein resides in the cytoplasm. It localises to the cytoskeleton. Functionally, binds to actin and affects the structure of the cytoskeleton. At high concentrations, profilin prevents the polymerization of actin, whereas it enhances it at low concentrations. The sequence is that of Profilin-7 from Phleum pratense (Common timothy).